A 580-amino-acid chain; its full sequence is Tetratricopeptide repeat protein 39C (580 aa).

3 TPR repeats span residues 312–345, 350–383, and 482–515; these read SLFM…AVDQ, HVCL…SRWS, and GLKH…ELCR.

It belongs to the TTC39 family.

This is Tetratricopeptide repeat protein 39C (Ttc39c) from Mus musculus (Mouse).